We begin with the raw amino-acid sequence, 64 residues long: Large ribosomal subunit protein bL35 (64 aa).

Residues 1–27 are disordered; it reads MPKMKTKSGAKKRFKPTASGFKHKHAF.

This sequence belongs to the bacterial ribosomal protein bL35 family.

This Azotobacter vinelandii (strain DJ / ATCC BAA-1303) protein is Large ribosomal subunit protein bL35.